A 119-amino-acid chain; its full sequence is Large ribosomal subunit protein uL18 (119 aa).

The disordered stretch occupies residues 1-26; sequence MGQNDKAARRQKIKLRSKTRGQGTAA. Residues 9–19 show a composition bias toward basic residues; it reads RRQKIKLRSKT.

It belongs to the universal ribosomal protein uL18 family. Part of the 50S ribosomal subunit; part of the 5S rRNA/L5/L18/L25 subcomplex. Contacts the 5S and 23S rRNAs.

In terms of biological role, this is one of the proteins that bind and probably mediate the attachment of the 5S RNA into the large ribosomal subunit, where it forms part of the central protuberance. This is Large ribosomal subunit protein uL18 from Prosthecochloris aestuarii (strain DSM 271 / SK 413).